Here is an 875-residue protein sequence, read N- to C-terminus: Peptidyl-glycine alpha-amidating monooxygenase B (875 aa).

A signal peptide spans 1–39 (MDMASLISSLLVLFLIFQNSCYCFRSPLSVFKRYEESTR). The interval 3-394 (MASLISSLLV…KREEEEVLNQ (392 aa)) is peptidylglycine alpha-hydroxylating monooxygenase. Residues 40–763 (SLSNDCLGTT…PSVVQESSAG (724 aa)) lie on the Intragranular side of the membrane. Cystine bridges form between C45–C184, C79–C124, C112–C129, C225–C332, and C291–C313. The Cu(2+) site is built by H105 and H106. Cu(2+) is bound by residues H170, H240, H242, and M312. A peptidyl-alpha-hydroxyglycine alpha-amidating lyase region spans residues 395-716 (DVHLEEDTDW…SPSKAEHRSV (322 aa)). R430 lines the a protein pocket. An N-linked (GlcNAc...) asparagine glycan is attached at N465. NHL repeat units lie at residues 467-508 (SKVL…VGAE), 516-561 (LGRA…FSPN), and 569-613 (GEET…FHAK). 2 cysteine pairs are disulfide-bonded: C530–C551 and C598–C609. A protein contacts are provided by Y550 and R602. N-linked (GlcNAc...) asparagine glycosylation occurs at N662. Residues 666–709 (GDILDTFIPARKNFEMPHDIAAGDDGTVYVGDAHANAVWKFSPS) form an NHL 4 repeat. The segment at 735 to 755 (HMRSRPKTNESVGQQTQEKPS) is disordered. Residue N743 is glycosylated (N-linked (GlcNAc...) asparagine). A compositionally biased stretch (polar residues) spans 743 to 755 (NESVGQQTQEKPS). Residues 764–787 (VSFVLIITLLIIPVVVLIAIAIFI) traverse the membrane as a helical segment. The Cytoplasmic portion of the chain corresponds to 788–875 (RWRKVRMYGG…APPIPPVSSS (88 aa)). The tract at residues 837 to 875 (KGFDRLSTEGSDQEKDDDDDGSDSEEEYSAPPIPPVSSS) is disordered. Over residues 850–864 (EKDDDDDGSDSEEEY) the composition is skewed to acidic residues.

In the C-terminal section; belongs to the peptidyl-alpha-hydroxyglycine alpha-amidating lyase family. This sequence in the N-terminal section; belongs to the copper type II ascorbate-dependent monooxygenase family. In terms of assembly, monomer. Requires Zn(2+) as cofactor. Cu(2+) serves as cofactor.

It is found in the cytoplasmic vesicle. It localises to the secretory vesicle membrane. The catalysed reaction is a [peptide]-C-terminal glycine + 2 L-ascorbate + O2 = a [peptide]-C-terminal (2S)-2-hydroxyglycine + 2 monodehydro-L-ascorbate radical + H2O. It catalyses the reaction a [peptide]-C-terminal (2S)-2-hydroxyglycine = a [peptide]-C-terminal amide + glyoxylate. Its function is as follows. Bifunctional enzyme that catalyzes amidation of the C-terminus of proteins. Alpha-amidation is present at the C-terminus of many endocrine hormones and neuropeptides and is required for their activity. C-terminal amidation also takes place in response to protein fragmentation triggered by oxidative stress, promoting degradation of amidated protein fragments by the proteasome. Alpha-amidation involves two sequential reactions, both of which are catalyzed by separate catalytic domains of the enzyme. The first step, catalyzed by peptidyl alpha-hydroxylating monooxygenase (PHM) domain, is the copper-, ascorbate-, and O2- dependent stereospecific hydroxylation (with S stereochemistry) at the alpha-carbon (C-alpha) of the C-terminal glycine of the peptidylglycine substrate. The second step, catalyzed by the peptidylglycine amidoglycolate lyase (PAL) domain, is the zinc-dependent cleavage of the N-C-alpha bond, producing the alpha-amidated peptide and glyoxylate. The protein is Peptidyl-glycine alpha-amidating monooxygenase B (pam-b) of Xenopus laevis (African clawed frog).